Reading from the N-terminus, the 223-residue chain is MSQTKTAKVRVTLFFILAGGVLAMVAVVTDHWAVLSPHLEHHNETCVAAHFGLWRICTTWVAMHNQDKNCDGTIPAGEKNCSYFRHFNPGESSEIFEFTTQKEYSISAAAIAIFSLGFIIIGSICAFLSFGNKRDYLLRPASMFYAFAGLCLIVSVEVMRQSVKRMIDSEDTVWIEYYYSWSFACACAGFTLLFLGGLFLLLFSLPRMPQNPWESCMDTESEH.

Topologically, residues 1 to 10 (MSQTKTAKVR) are cytoplasmic. Residues 11–29 (VTLFFILAGGVLAMVAVVT) traverse the membrane as a helical segment. Residues 30–109 (DHWAVLSPHL…TQKEYSISAA (80 aa)) lie on the Extracellular side of the membrane. Residues asparagine 43 and asparagine 80 are each glycosylated (N-linked (GlcNAc...) asparagine). An intrachain disulfide couples cysteine 57 to cysteine 81. A helical transmembrane segment spans residues 110–130 (AIAIFSLGFIIIGSICAFLSF). Topologically, residues 131–135 (GNKRD) are cytoplasmic. A helical membrane pass occupies residues 136–156 (YLLRPASMFYAFAGLCLIVSV). Over 157-180 (EVMRQSVKRMIDSEDTVWIEYYYS) the chain is Extracellular. The helical transmembrane segment at 181–205 (WSFACACAGFTLLFLGGLFLLLFSL) threads the bilayer. Residues 206–223 (PRMPQNPWESCMDTESEH) are Cytoplasmic-facing.

Belongs to the PMP-22/EMP/MP20 family. CACNG subfamily. Component of a calcium channel complex consisting of a pore-forming alpha subunit (CACNA1S) and the ancillary subunits CACNB1 or CACNB2, CACNG1 and CACNA2D1. The channel complex contains alpha, beta, gamma and delta subunits in a 1:1:1:1 ratio, i.e. it contains either CACNB1 or CACNB2. In terms of processing, N-glycosylated. In terms of tissue distribution, skeletal muscle.

The protein resides in the cell membrane. The protein localises to the sarcolemma. Regulatory subunit of the voltage-gated calcium channel that gives rise to L-type calcium currents in skeletal muscle. Regulates channel inactivation kinetics. This chain is Voltage-dependent calcium channel gamma-1 subunit (Cacng1), found in Rattus norvegicus (Rat).